A 92-amino-acid chain; its full sequence is Acylphosphatase (92 aa).

Residues 5 to 92 form the Acylphosphatase-like domain; it reads ATAAYVYGVV…TDYKGFTIRY (88 aa). Residues R20 and N38 contribute to the active site.

Belongs to the acylphosphatase family.

The catalysed reaction is an acyl phosphate + H2O = a carboxylate + phosphate + H(+). In Pectobacterium atrosepticum (strain SCRI 1043 / ATCC BAA-672) (Erwinia carotovora subsp. atroseptica), this protein is Acylphosphatase (acyP).